We begin with the raw amino-acid sequence, 508 residues long: Polyamine oxidase FMS1 (508 aa).

This sequence belongs to the flavin monoamine oxidase family. FAD serves as cofactor.

It carries out the reaction spermine + O2 + H2O = 3-aminopropanal + spermidine + H2O2. The catalysed reaction is spermidine + O2 + H2O = 3-aminopropanal + putrescine + H2O2. It catalyses the reaction N(1)-acetylspermine + O2 + H2O = 3-acetamidopropanal + spermidine + H2O2. The enzyme catalyses N(1)-acetylspermidine + O2 + H2O = 3-acetamidopropanal + putrescine + H2O2. It carries out the reaction N(8)-acetylspermidine + O2 + H2O = 4-acetamidobutanal + propane-1,3-diamine + H2O2. In terms of biological role, involved in the production of beta-alanine, a precursor of pantothenic acid. Multicopy suppressor of fenpropimorph resistance. The sequence is that of Polyamine oxidase FMS1 (FMS1) from Saccharomyces cerevisiae (strain ATCC 204508 / S288c) (Baker's yeast).